The chain runs to 403 residues: RILP-like protein 1 (403 aa).

A Phosphoserine modification is found at Ser7. The RH1 domain occupies 10-97 (AAESALEKNV…RLERMDRIEK (88 aa)). Cys47 is modified (S-nitrosocysteine). A coiled-coil region spans residues 76–258 (ELDELRLELD…KLRERLQGEH (183 aa)). Disordered regions lie at residues 254–275 (LQGE…GEES), 327–352 (EMEE…PESG), and 384–403 (ANTH…LQHL). Ser259 is modified (phosphoserine). The span at 262 to 275 (GEEEPETEPVGEES) shows a compositional bias: acidic residues. One can recognise an RH2 domain in the interval 291-356 (RPRFTLQELR…PQPESGIKRL (66 aa)). Positions 394–403 (EQGQEALQHL) are enriched in polar residues.

Belongs to the RILPL family. In terms of assembly, interacts (when S-nitrosylated) with GAPDH. Interacts with RAB8A; interaction is dependent on the phosphorylation of 'Thr-72' of RAB8A. Interacts with RAB10 and RAB12; the interaction is dependent on the phosphorylation of 'Thr-73' of RAB10, and 'Ser-105' of RAB12. Post-translationally, S-nitrosylation is required for the interaction with GAPDH. In terms of tissue distribution, widely expressed. Expressed at lower level in liver and kidney.

It is found in the cytoplasm. The protein localises to the cytosol. The protein resides in the cytoskeleton. Its subcellular location is the microtubule organizing center. It localises to the centrosome. It is found in the centriole. The protein localises to the cilium basal body. Plays a role in the regulation of cell shape and polarity. Plays a role in cellular protein transport, including protein transport away from primary cilia. Neuroprotective protein, which acts by sequestring GAPDH in the cytosol and prevent the apoptotic function of GAPDH in the nucleus. Competes with SIAH1 for binding GAPDH. Does not regulate lysosomal morphology and distribution. Binds to RAB10 following LRRK2-mediated RAB10 phosphorylation which leads to inhibition of ciliogenesis. The protein is RILP-like protein 1 (RILPL1) of Homo sapiens (Human).